Reading from the N-terminus, the 595-residue chain is Tyrosine-protein phosphatase cdcA (595 aa).

The tract at residues 32 to 57 (TPFPYPAEQPKSPSKRRAQASPSKKR) is disordered. Positions 44–57 (PSKRRAQASPSKKR) are enriched in basic residues. The Tyrosine-protein phosphatase domain maps to 233-381 (LPSTVSEVRS…QGSFREWWFE (149 aa)). The active-site Phosphocysteine intermediate is the Cys322. The segment at 392–595 (QPNPVTPGRS…GSPVRVKAQA (204 aa)) is disordered. Positions 449-461 (RKSHRKDSRHHPY) are enriched in basic residues. Residues 471 to 483 (VDKDTRKTRRSTD) show a composition bias toward basic and acidic residues. Positions 502–526 (SKSPAASPGQRSISYSATVTASYTL) are enriched in polar residues.

The protein belongs to the protein-tyrosine phosphatase family. Non-receptor class CDC14 subfamily.

It localises to the nucleus. The protein resides in the cytoplasm. It is found in the cell septum. The enzyme catalyses O-phospho-L-tyrosyl-[protein] + H2O = L-tyrosyl-[protein] + phosphate. Functionally, protein phosphatase which antagonizes mitotic cyclin-dependent kinase nimX, the inactivation of which is essential for exit from mitosis. To access its substrates, is released from nucleolar sequestration during mitosis. Plays an essential in coordinating the nuclear division cycle with cytokinesis through the cytokinesis checkpoint. Involved in chromosome segregation, where it is required for meiosis I spindle dissambly as well as for establishing two consecutive chromosome segregation phases. Required for the transcription of the two major endoglucanase genes eglA and eglB and growth on synthetic cellulose as the sole carbon source. The chain is Tyrosine-protein phosphatase cdcA (cdcA) from Emericella nidulans (strain FGSC A4 / ATCC 38163 / CBS 112.46 / NRRL 194 / M139) (Aspergillus nidulans).